Here is a 289-residue protein sequence, read N- to C-terminus: GTPase Era (289 aa).

One can recognise an Era-type G domain in the interval 2–167; that stretch reads KSGFISLIGR…LDEIYKYLPE (166 aa). The G1 stretch occupies residues 10–17; sequence GRTNAGKS. 10–17 serves as a coordination point for GTP; sequence GRTNAGKS. The segment at 36–40 is G2; it reads NATRR. The tract at residues 57 to 60 is G3; it reads DTPG. Residues 57–61 and 116–119 each bind GTP; these read DTPGL and TKID. Positions 116–119 are G4; sequence TKID. A G5 region spans residues 146 to 148; that stretch reads LSV. One can recognise a KH type-2 domain in the interval 198–274; sequence VSDEVPYSTD…FLKINVKIDK (77 aa).

Belongs to the TRAFAC class TrmE-Era-EngA-EngB-Septin-like GTPase superfamily. Era GTPase family. Monomer.

The protein resides in the cytoplasm. It localises to the cell inner membrane. Its function is as follows. An essential GTPase that binds both GDP and GTP, with rapid nucleotide exchange. Plays a role in 16S rRNA processing and 30S ribosomal subunit biogenesis and possibly also in cell cycle regulation and energy metabolism. This chain is GTPase Era, found in Campylobacter fetus subsp. fetus (strain 82-40).